The following is a 62-amino-acid chain: MEYSTGQHLLVVPEIKKYVLTNTFSGEEHIVTEQMLKSAFKDEYNKIMSNRNSAWTVTDFYE.

This Escherichia coli (Bacteriophage RB69) protein is Protein Gp45.2 (45.2).